Consider the following 219-residue polypeptide: Uracil-DNA glycosylase (219 aa).

Residue aspartate 62 is the Proton acceptor of the active site.

Belongs to the uracil-DNA glycosylase (UDG) superfamily. UNG family.

The protein resides in the cytoplasm. It catalyses the reaction Hydrolyzes single-stranded DNA or mismatched double-stranded DNA and polynucleotides, releasing free uracil.. In terms of biological role, excises uracil residues from the DNA which can arise as a result of misincorporation of dUMP residues by DNA polymerase or due to deamination of cytosine. This chain is Uracil-DNA glycosylase, found in Lactococcus lactis subsp. cremoris (strain MG1363).